The chain runs to 233 residues: Ubiquitin carboxyl-terminal hydrolase isozyme L4 (233 aa).

Residues 5–232 enclose the UCH catalytic domain; that stretch reads RWLPLEANPE…LRFNAIALSA (228 aa). Residues 8-13 are interaction with ubiquitin; that stretch reads PLEANP. Cysteine 95 (nucleophile) is an active-site residue. Position 133 is a phosphoserine (serine 133). Histidine 172 serves as the catalytic Proton donor. The interval 222–227 is interaction with ubiquitin; the sequence is ELRFNA.

This sequence belongs to the peptidase C12 family. As to expression, expressed in various tissues at low level.

It is found in the cytoplasm. The catalysed reaction is Thiol-dependent hydrolysis of ester, thioester, amide, peptide and isopeptide bonds formed by the C-terminal Gly of ubiquitin (a 76-residue protein attached to proteins as an intracellular targeting signal).. Ubiquitin-protein hydrolase is involved both in the processing of ubiquitin precursors and of ubiquitinated proteins. This enzyme is a thiol protease that recognizes and hydrolyzes a peptide bond at the C-terminal glycine of ubiquitin. The sequence is that of Ubiquitin carboxyl-terminal hydrolase isozyme L4 (Uchl4) from Mus musculus (Mouse).